A 1368-amino-acid polypeptide reads, in one-letter code: Indole-3-acetaldehyde oxidase (1368 aa).

The region spanning 19–108 (TSLVFAINGQ…GCSITTSDGL (90 aa)) is the 2Fe-2S ferredoxin-type domain. Residues Cys60, Cys65, and Cys68 each coordinate [2Fe-2S] cluster. The FAD-binding PCMH-type domain occupies 246–427 (LHSRKYRWSS…LSLEIPSWHS (182 aa)).

It belongs to the xanthine dehydrogenase family. As to quaternary structure, aldehyde oxidases (AO) are homodimers and heterodimers of AO subunits. AO-alpha is an AAO1 homodimer; AO-beta is an AAO1-AAO2 heterodimer. Requires [2Fe-2S] cluster as cofactor. The cofactor is FAD. It depends on Mo-molybdopterin as a cofactor. In terms of tissue distribution, predominantly expressed in roots, seedlings, mature siliques and seeds, and to lower extent in stems and rosettes. In seedlings, mostly expressed in lower part of hypocotyls and roots.

The protein resides in the cytoplasm. The catalysed reaction is indole-3-acetaldehyde + O2 + H2O = (indol-3-yl)acetate + H2O2 + H(+). Strongly inhibited by iodoacetate and potassium cyanide (KCN). Weakly inhibited by 2-mercaptoethanol, dithiothreitol (DTT), menadione, estradiol, 4'-(9-acridinylamino)methanesulfon-m-anisidine (mAMSA), allopurinol and tritonX-100. Not affected by p-chloromercuribenzoate. In terms of biological role, in higher plants aldehyde oxidases (AO) appear to be homo- and heterodimeric assemblies of AO subunits with probably different physiological functions. AO-alpha may be involved in the biosynthesis of auxin, and in biosynthesis of abscisic acid (ABA) in seeds. In vitro, AO-alpha uses heptaldehyde, protocatechualdehyde, benzaldehyde, indole-3-aldehyde (IAld), indole-3-acetaldehyde (IAAld), cinnamaldehyde and citral as substrates; AO-beta uses IAAld, IAld and naphtaldehyde as substrates. The sequence is that of Indole-3-acetaldehyde oxidase (AAO1) from Arabidopsis thaliana (Mouse-ear cress).